The following is a 424-amino-acid chain: Histidine--tRNA ligase (424 aa).

It belongs to the class-II aminoacyl-tRNA synthetase family. Homodimer.

The protein resides in the cytoplasm. The catalysed reaction is tRNA(His) + L-histidine + ATP = L-histidyl-tRNA(His) + AMP + diphosphate + H(+). In Francisella philomiragia subsp. philomiragia (strain ATCC 25017 / CCUG 19701 / FSC 153 / O#319-036), this protein is Histidine--tRNA ligase.